The following is a 124-amino-acid chain: Fluoride-specific ion channel FluC (124 aa).

A run of 4 helical transmembrane segments spans residues 4-24, 35-55, 60-80, and 102-122; these read LLLV…ISIF, FGTL…YALG, ISPE…TTFS, and VVLN…LVFS. Na(+) is bound by residues G74 and T77.

This sequence belongs to the fluoride channel Fluc/FEX (TC 1.A.43) family.

Its subcellular location is the cell inner membrane. It carries out the reaction fluoride(in) = fluoride(out). Its activity is regulated as follows. Na(+) is not transported, but it plays an essential structural role and its presence is essential for fluoride channel function. In terms of biological role, fluoride-specific ion channel. Important for reducing fluoride concentration in the cell, thus reducing its toxicity. The chain is Fluoride-specific ion channel FluC from Shewanella baltica (strain OS185).